We begin with the raw amino-acid sequence, 627 residues long: Probable inactive receptor kinase At3g02880 (627 aa).

A signal peptide spans 1-23 (MKYKRKLSLSVVFLFVFYLAAVT). LRR repeat units lie at residues 91–112 (QLKT…DFSN), 115–137 (LLRY…LFTL), 139–161 (SIIR…VNSA), 163–184 (RLVT…ITLP), and 185–206 (LQQF…LSSW). Residues 222–246 (DTCEAESPNGGDAGGPNTPPEKKDS) are disordered. Residues 253 to 273 (AIVGIVIGCVVGLLLLLLILF) form a helical membrane-spanning segment. The Protein kinase domain maps to 345–620 (KASAEVLGKG…LIEEVSHSSG (276 aa)). A Phosphoserine modification is found at Ser347. Residues 351–359 (LGKGTVGSS) and Lys373 each bind ATP. The chain crosses the membrane as a helical span at residues 389–409 (LHVLGSMSHANLVTLIAYYFS). At Ser424 the chain carries Phosphoserine. Thr444 is subject to Phosphothreonine. Ser519 carries the post-translational modification Phosphoserine. Thr595 carries the post-translational modification Phosphothreonine. Residues Ser621 and Ser626 each carry the phosphoserine modification.

The protein belongs to the protein kinase superfamily. Ser/Thr protein kinase family.

It is found in the membrane. The sequence is that of Probable inactive receptor kinase At3g02880 from Arabidopsis thaliana (Mouse-ear cress).